A 213-amino-acid chain; its full sequence is uncharacterized protein (213 aa).

Residues 2-91 (SRHPEVKWAQ…AEAKWWKKLV (90 aa)) form the CS domain. Residues 168–213 (GMGGMGGMDEFEDESDDEEEVSKPQDAEKAAEAGKSQESDAKAETS) are disordered. A compositionally biased stretch (acidic residues) spans 176–187 (DEFEDESDDEEE). Residues 188–213 (VSKPQDAEKAAEAGKSQESDAKAETS) are compositionally biased toward basic and acidic residues.

Belongs to the p23/wos2 family.

This is an uncharacterized protein from Oryza sativa subsp. japonica (Rice).